The primary structure comprises 407 residues: Actinorhodin polyketide putative beta-ketoacyl synthase 2 (407 aa).

Positions 1 to 402 (MSVLITGVGV…GFNSAAVLRR (402 aa)) constitute a Ketosynthase family 3 (KS3) domain.

This sequence belongs to the thiolase-like superfamily. Beta-ketoacyl-ACP synthases family.

The sequence is that of Actinorhodin polyketide putative beta-ketoacyl synthase 2 from Streptomyces coelicolor (strain ATCC BAA-471 / A3(2) / M145).